The primary structure comprises 569 residues: Nucleoprotein (569 aa).

Residues 54-241 (MRKERRDDND…IDTKKSSLNI (188 aa)) form a binding site for the cap structure m7GTP region. Residues Asp389 and Glu391 each coordinate Mn(2+). Zn(2+) is bound by residues Glu399, Cys506, His509, and Cys529. Residue Asp533 coordinates Mn(2+).

Belongs to the arenaviridae nucleocapsid protein family. In terms of assembly, homomultimerizes to form the nucleocapsid. Binds to viral genomic RNA. Interacts with glycoprotein G2. Interacts with protein Z; this interaction probably directs the encapsidated genome to budding sites. Interacts with protein L; this interaction does not interfere with Z-L interaction. Interacts with host IKBKE (via Protein kinase domain); the interaction inhibits IKBKE kinase activity.

The protein resides in the virion. It localises to the host cytoplasm. Its function is as follows. Encapsidates the genome, protecting it from nucleases. The encapsidated genomic RNA is termed the nucleocapsid (NC). Serves as template for viral transcription and replication. The increased presence of protein N in host cell does not seem to trigger the switch from transcription to replication as observed in other negative strain RNA viruses. Through the interaction with host IKBKE, strongly inhibits the phosphorylation and nuclear translocation of host IRF3, a protein involved in interferon activation pathway, leading to the inhibition of interferon-beta and IRF3-dependent promoters activation. Also encodes a functional 3'-5' exoribonuclease that degrades preferentially dsRNA substrates and thereby participates in the suppression of interferon induction. The sequence is that of Nucleoprotein from Lassa virus (strain Mouse/Sierra Leone/Josiah/1976) (LASV).